The chain runs to 260 residues: Cytochrome c oxidase subunit 2 (260 aa).

The Mitochondrial intermembrane segment spans residues 1 to 39; it reads MKFEWLFLTIAPCDAAEPWQLGFQDAATPMMQGIIDLHH. A helical membrane pass occupies residues 40–61; it reads DIFFFLILILVFVSRILVRALW. Topologically, residues 62-76 are mitochondrial matrix; sequence HFHYKKNPIPQRIVH. Residues 77-104 traverse the membrane as a helical segment; the sequence is GTTIEILRTIFPSIIPMFIAIPSFALLY. Topologically, residues 105 to 260 are mitochondrial intermembrane; that stretch reads SMDEVVVDPA…QLIPQTTGEA (156 aa). Cu cation contacts are provided by His-186, Cys-221, Glu-223, Cys-225, and His-229. Glu-223 serves as a coordination point for Mg(2+).

This sequence belongs to the cytochrome c oxidase subunit 2 family. As to quaternary structure, component of the cytochrome c oxidase (complex IV, CIV), a multisubunit enzyme composed of a catalytic core of 3 subunits and several supernumerary subunits. The complex exists as a monomer or a dimer and forms supercomplexes (SCs) in the inner mitochondrial membrane with ubiquinol-cytochrome c oxidoreductase (cytochrome b-c1 complex, complex III, CIII). Cu cation is required as a cofactor.

It is found in the mitochondrion inner membrane. The enzyme catalyses 4 Fe(II)-[cytochrome c] + O2 + 8 H(+)(in) = 4 Fe(III)-[cytochrome c] + 2 H2O + 4 H(+)(out). Component of the cytochrome c oxidase, the last enzyme in the mitochondrial electron transport chain which drives oxidative phosphorylation. The respiratory chain contains 3 multisubunit complexes succinate dehydrogenase (complex II, CII), ubiquinol-cytochrome c oxidoreductase (cytochrome b-c1 complex, complex III, CIII) and cytochrome c oxidase (complex IV, CIV), that cooperate to transfer electrons derived from NADH and succinate to molecular oxygen, creating an electrochemical gradient over the inner membrane that drives transmembrane transport and the ATP synthase. Cytochrome c oxidase is the component of the respiratory chain that catalyzes the reduction of oxygen to water. Electrons originating from reduced cytochrome c in the intermembrane space (IMS) are transferred via the dinuclear copper A center (CU(A)) of subunit 2 and heme A of subunit 1 to the active site in subunit 1, a binuclear center (BNC) formed by heme A3 and copper B (CU(B)). The BNC reduces molecular oxygen to 2 water molecules using 4 electrons from cytochrome c in the IMS and 4 protons from the mitochondrial matrix. In Glycine max (Soybean), this protein is Cytochrome c oxidase subunit 2 (COX2).